Consider the following 187-residue polypeptide: Shikimate kinase (187 aa).

19–24 contributes to the ATP binding site; sequence GSGKST. Mg(2+) is bound at residue serine 23. Positions 41, 65, and 87 each coordinate substrate. Residue arginine 124 coordinates ATP. Arginine 143 is a substrate binding site. Arginine 160 provides a ligand contact to ATP.

The protein belongs to the shikimate kinase family. As to quaternary structure, monomer. Mg(2+) is required as a cofactor.

Its subcellular location is the cytoplasm. The enzyme catalyses shikimate + ATP = 3-phosphoshikimate + ADP + H(+). Its pathway is metabolic intermediate biosynthesis; chorismate biosynthesis; chorismate from D-erythrose 4-phosphate and phosphoenolpyruvate: step 5/7. Its function is as follows. Catalyzes the specific phosphorylation of the 3-hydroxyl group of shikimic acid using ATP as a cosubstrate. This chain is Shikimate kinase, found in Rippkaea orientalis (strain PCC 8801 / RF-1) (Cyanothece sp. (strain PCC 8801)).